The chain runs to 489 residues: Siroheme synthase (489 aa).

The tract at residues 1–203 (MDFFPVFMRL…GREDAARETL (203 aa)) is precorrin-2 dehydrogenase /sirohydrochlorin ferrochelatase. Residues 22 to 23 (PV) and 43 to 44 (PA) each bind NAD(+). The interval 218-489 (GEVFLVGAGP…ARSSTEGAEA (272 aa)) is uroporphyrinogen-III C-methyltransferase. Pro-227 is a binding site for S-adenosyl-L-methionine. Residue Asp-250 is the Proton acceptor of the active site. The Proton donor role is filled by Lys-272. S-adenosyl-L-methionine is bound by residues 303–305 (GGD), Ile-308, 333–334 (TA), Met-385, and Gly-414.

This sequence in the N-terminal section; belongs to the precorrin-2 dehydrogenase / sirohydrochlorin ferrochelatase family. The protein in the C-terminal section; belongs to the precorrin methyltransferase family.

It carries out the reaction uroporphyrinogen III + 2 S-adenosyl-L-methionine = precorrin-2 + 2 S-adenosyl-L-homocysteine + H(+). The enzyme catalyses precorrin-2 + NAD(+) = sirohydrochlorin + NADH + 2 H(+). It catalyses the reaction siroheme + 2 H(+) = sirohydrochlorin + Fe(2+). It functions in the pathway cofactor biosynthesis; adenosylcobalamin biosynthesis; precorrin-2 from uroporphyrinogen III: step 1/1. It participates in cofactor biosynthesis; adenosylcobalamin biosynthesis; sirohydrochlorin from precorrin-2: step 1/1. Its pathway is porphyrin-containing compound metabolism; siroheme biosynthesis; precorrin-2 from uroporphyrinogen III: step 1/1. The protein operates within porphyrin-containing compound metabolism; siroheme biosynthesis; siroheme from sirohydrochlorin: step 1/1. It functions in the pathway porphyrin-containing compound metabolism; siroheme biosynthesis; sirohydrochlorin from precorrin-2: step 1/1. Multifunctional enzyme that catalyzes the SAM-dependent methylations of uroporphyrinogen III at position C-2 and C-7 to form precorrin-2 via precorrin-1. Then it catalyzes the NAD-dependent ring dehydrogenation of precorrin-2 to yield sirohydrochlorin. Finally, it catalyzes the ferrochelation of sirohydrochlorin to yield siroheme. The sequence is that of Siroheme synthase from Thioalkalivibrio sulfidiphilus (strain HL-EbGR7).